The primary structure comprises 314 residues: Oxalate oxidoreductase subunit beta (314 aa).

The [4Fe-4S] cluster site is built by Cys-24, Cys-27, Cys-52, and Cys-225.

In terms of assembly, dimer of heterotrimer of one alpha, one beta and one delta subunit. [4Fe-4S] cluster serves as cofactor.

It carries out the reaction oxidized 2[4Fe-4S]-[ferredoxin] + oxalate = reduced 2[4Fe-4S]-[ferredoxin] + 2 CO2. In terms of biological role, catalyzes the anaerobic oxidation of oxalate using a broad range of electron acceptors, including ferredoxin and the nickel-dependent carbon monoxide dehydrogenase. Does not require coenzyme A as cosubstrate. Enables anaerobic growth on oxalate which is used as energy source by the bacteria. The protein is Oxalate oxidoreductase subunit beta of Moorella thermoacetica (strain ATCC 39073 / JCM 9320).